The following is a 325-amino-acid chain: G-protein coupled receptor E6 (325 aa).

7 helical membrane-spanning segments follow: residues 45–65 (LFGT…MGFF), 71–91 (FTPS…LWLM), 106–126 (IVTE…NVGM), 145–165 (PAAI…VIAV), 198–218 (LVAK…GTAL), 233–253 (AICV…LTAM), and 274–294 (VFIY…MFTG).

Belongs to the G-protein coupled receptor 1 family.

The protein localises to the host membrane. This Equus caballus (Horse) protein is G-protein coupled receptor E6 (E6).